A 197-amino-acid chain; its full sequence is Small ribosomal subunit protein uS4B (197 aa).

The region spanning 88-151 (CRLDNIAYRI…RKNDEFADNF (64 aa)) is the S4 RNA-binding domain.

Belongs to the universal ribosomal protein uS4 family. Part of the 30S ribosomal subunit. Contacts protein S5. The interaction surface between S4 and S5 is involved in control of translational fidelity.

In terms of biological role, one of the primary rRNA binding proteins, it binds directly to 16S rRNA where it nucleates assembly of the body of the 30S subunit. Its function is as follows. With S5 and S12 plays an important role in translational accuracy. This chain is Small ribosomal subunit protein uS4B, found in Clostridium botulinum (strain Langeland / NCTC 10281 / Type F).